We begin with the raw amino-acid sequence, 94 residues long: Potassium channel protein kcv (94 aa).

A helical transmembrane segment spans residues 14–34; sequence FMIHLFILAMFVMIYKFFPGG. Asn-38 carries an N-linked (GlcNAc...) asparagine; by host glycan. The helical transmembrane segment at 74-94 threads the bilayer; sequence TGAKLCTIAHIVTVFFIVLTL.

This sequence belongs to the two pore domain potassium channel (TC 1.A.1.12) family.

Its subcellular location is the membrane. Potassium-selective channel essential in the virus replication cycle. May be involved in preventing multiple infections (Potential). This is Potassium channel protein kcv (A250R) from Paramecium bursaria Chlorella virus 1 (PBCV-1).